A 107-amino-acid polypeptide reads, in one-letter code: ESAT-6-like protein EsxD (107 aa).

The protein belongs to the WXG100 family. CFP-10 subfamily.

Its subcellular location is the secreted. This is ESAT-6-like protein EsxD from Mycobacterium tuberculosis (strain ATCC 25618 / H37Rv).